An 88-amino-acid chain; its full sequence is Small ribosomal subunit protein uS15 (88 aa).

Belongs to the universal ribosomal protein uS15 family. In terms of assembly, part of the 30S ribosomal subunit. Forms a bridge to the 50S subunit in the 70S ribosome, contacting the 23S rRNA.

Functionally, one of the primary rRNA binding proteins, it binds directly to 16S rRNA where it helps nucleate assembly of the platform of the 30S subunit by binding and bridging several RNA helices of the 16S rRNA. Forms an intersubunit bridge (bridge B4) with the 23S rRNA of the 50S subunit in the ribosome. The sequence is that of Small ribosomal subunit protein uS15 from Geotalea uraniireducens (strain Rf4) (Geobacter uraniireducens).